The primary structure comprises 136 residues: Acyl carrier protein 1, chloroplastic (136 aa).

The transit peptide at 1 to 52 directs the protein to the chloroplast; it reads MASVTGTSISMASFKASLAPSRVSNLRSVSLPIKGKSFAPLRMRSARFVVCC. The 76-residue stretch at 56–131 folds into the Carrier domain; the sequence is PETVEKVCAI…DAADLIEKLI (76 aa). Serine 91 carries the post-translational modification O-(pantetheine 4'-phosphoryl)serine.

Belongs to the acyl carrier protein (ACP) family. 4'-phosphopantetheine is transferred from CoA to a specific serine of apo-ACP by acpS. This modification is essential for activity because fatty acids are bound in thioester linkage to the sulfhydryl of the prosthetic group.

The protein resides in the plastid. The protein localises to the chloroplast. It functions in the pathway lipid metabolism; fatty acid biosynthesis. In terms of biological role, carrier of the growing fatty acid chain in fatty acid biosynthesis. This Casuarina glauca (Swamp oak) protein is Acyl carrier protein 1, chloroplastic (ACP1).